We begin with the raw amino-acid sequence, 97 residues long: Protein RnfH (97 aa).

The protein belongs to the UPF0125 (RnfH) family.

This Aliivibrio salmonicida (strain LFI1238) (Vibrio salmonicida (strain LFI1238)) protein is Protein RnfH.